We begin with the raw amino-acid sequence, 258 residues long: tRNA pseudouridine synthase A (258 aa).

Residue D53 is the Nucleophile of the active site. Y111 serves as a coordination point for substrate.

This sequence belongs to the tRNA pseudouridine synthase TruA family. As to quaternary structure, homodimer.

The catalysed reaction is uridine(38/39/40) in tRNA = pseudouridine(38/39/40) in tRNA. Formation of pseudouridine at positions 38, 39 and 40 in the anticodon stem and loop of transfer RNAs. This Streptococcus agalactiae serotype V (strain ATCC BAA-611 / 2603 V/R) protein is tRNA pseudouridine synthase A.